Reading from the N-terminus, the 465-residue chain is Neuraminidase (465 aa).

Topologically, residues 1–11 are intravirion; it reads MLPSTIQTLTL. A helical membrane pass occupies residues 12–34; sequence FLTSGGVLLSLYVSASLSYLLYS. The tract at residues 13–35 is involved in apical transport and lipid raft association; sequence LTSGGVLLSLYVSASLSYLLYSD. The Virion surface segment spans residues 35–465; that stretch reads DILLRFSSKI…DTVTGVDMAL (431 aa). The hypervariable stalk region stretch occupies residues 38-85; it reads LRFSSKITAPTMTLDCANASNVQAVNRSATKEMTFLLPEPEWTYPRLS. N-linked (GlcNAc...) asparagine; by host glycans are attached at residues Asn55 and Asn63. Cystine bridges form between Cys86–Cys419, Cys121–Cys126, Cys181–Cys228, Cys230–Cys235, Cys276–Cys290, Cys278–Cys288, Cys317–Cys336, and Cys423–Cys446. The head of neuraminidase stretch occupies residues 88 to 465; sequence GSTFQKALLI…DTVTGVDMAL (378 aa). Residue Arg115 participates in substrate binding. The N-linked (GlcNAc...) asparagine; by host glycan is linked to Asn143. Residue Asp148 is the Proton donor/acceptor of the active site. Arg149 lines the substrate pocket. Residue 274 to 275 participates in substrate binding; it reads EE. N-linked (GlcNAc...) asparagine; by host glycosylation is present at Asn283. Substrate is bound at residue Arg291. Residues Asp292 and Asp323 each coordinate Ca(2+). The interval 328–347 is disordered; that stretch reads DDGSITGPCESDGDKGRGGI. A substrate-binding site is contributed by Arg373. Residue Tyr408 is the Nucleophile of the active site.

This sequence belongs to the glycosyl hydrolase 34 family. In terms of assembly, homotetramer. The cofactor is Ca(2+). Post-translationally, N-glycosylated.

Its subcellular location is the virion membrane. It is found in the host apical cell membrane. The catalysed reaction is Hydrolysis of alpha-(2-&gt;3)-, alpha-(2-&gt;6)-, alpha-(2-&gt;8)- glycosidic linkages of terminal sialic acid residues in oligosaccharides, glycoproteins, glycolipids, colominic acid and synthetic substrates.. Inhibited by the neuraminidase inhibitors zanamivir (Relenza) and oseltamivir (Tamiflu). These drugs interfere with the release of progeny virus from infected cells and are effective against all influenza strains. Resistance to neuraminidase inhibitors is quite rare. In terms of biological role, catalyzes the removal of terminal sialic acid residues from viral and cellular glycoconjugates. Cleaves off the terminal sialic acids on the glycosylated HA during virus budding to facilitate virus release. Additionally helps virus spread through the circulation by further removing sialic acids from the cell surface. These cleavages prevent self-aggregation and ensure the efficient spread of the progeny virus from cell to cell. Otherwise, infection would be limited to one round of replication. Described as a receptor-destroying enzyme because it cleaves a terminal sialic acid from the cellular receptors. May facilitate viral invasion of the upper airways by cleaving the sialic acid moieties on the mucin of the airway epithelial cells. Likely to plays a role in the budding process through its association with lipid rafts during intracellular transport. May additionally display a raft-association independent effect on budding. Plays a role in the determination of host range restriction on replication and virulence. Sialidase activity in late endosome/lysosome traffic seems to enhance virus replication. The chain is Neuraminidase from Influenza B virus (strain B/Memphis/3/1989).